Here is a 331-residue protein sequence, read N- to C-terminus: Autoinducer 2 import system permease protein LsrD (331 aa).

Helical transmembrane passes span 7-27 (YGWELALAALLVLEIGLFGLS), 45-65 (ICIGIVALPLTMVIVSGGIDI), 67-87 (FGSTIGLCSIFLGVMFQAGVP), 90-110 (IAIPLTLLVGALCGLINAGLI), 118-138 (LVITLGTMYLFGGSALLLSGI), 162-182 (LLGLPVPLVIFMVCVLLFWLL), 212-232 (TLCLLYALTGMASAIAAVLLV), 240-260 (SDLGASFLMPAITAVVLGGAN), 261-281 (IYGGSGSILGTALAVLLVGYL), and 288-308 (IGTPNQISSALSGALLILVVV).

This sequence belongs to the binding-protein-dependent transport system permease family. AraH/RbsC subfamily. The complex is composed of two ATP-binding proteins (LsrA), two transmembrane proteins (LsrC and LsrD) and a solute-binding protein (LsrB).

It localises to the cell inner membrane. Its function is as follows. Part of the ABC transporter complex LsrABCD involved in autoinducer 2 (AI-2) import. Probably responsible for the translocation of the substrate across the membrane. In Yersinia enterocolitica serotype O:8 / biotype 1B (strain NCTC 13174 / 8081), this protein is Autoinducer 2 import system permease protein LsrD (lsrD).